The sequence spans 939 residues: Probable importin ECU10_0620 (939 aa).

The 68-residue stretch at 23 to 90 (AEAMLMDLEK…VENILDLFLY (68 aa)) folds into the Importin N-terminal domain.

Belongs to the importin beta family.

The protein localises to the nucleus. The protein resides in the cytoplasm. In terms of biological role, active in protein import into the nucleus. This is Probable importin ECU10_0620 from Encephalitozoon cuniculi (strain GB-M1) (Microsporidian parasite).